The primary structure comprises 305 residues: uncharacterized protein (305 aa).

Residues Ile-8–Phe-28 form a helical membrane-spanning segment.

The protein localises to the membrane. This is an uncharacterized protein from Bacillus subtilis (strain 168).